The sequence spans 440 residues: UDP-N-acetylmuramoylalanine--D-glutamate ligase (440 aa).

Residue 113-119 (GTNGKST) participates in ATP binding.

The protein belongs to the MurCDEF family.

Its subcellular location is the cytoplasm. It carries out the reaction UDP-N-acetyl-alpha-D-muramoyl-L-alanine + D-glutamate + ATP = UDP-N-acetyl-alpha-D-muramoyl-L-alanyl-D-glutamate + ADP + phosphate + H(+). It functions in the pathway cell wall biogenesis; peptidoglycan biosynthesis. Cell wall formation. Catalyzes the addition of glutamate to the nucleotide precursor UDP-N-acetylmuramoyl-L-alanine (UMA). In Buchnera aphidicola subsp. Schizaphis graminum (strain Sg), this protein is UDP-N-acetylmuramoylalanine--D-glutamate ligase (murD).